A 511-amino-acid chain; its full sequence is Putative thymidine phosphorylase (511 aa).

The protein belongs to the thymidine/pyrimidine-nucleoside phosphorylase family. Type 2 subfamily.

The enzyme catalyses thymidine + phosphate = 2-deoxy-alpha-D-ribose 1-phosphate + thymine. The polypeptide is Putative thymidine phosphorylase (Polaromonas sp. (strain JS666 / ATCC BAA-500)).